We begin with the raw amino-acid sequence, 365 residues long: L-lactate oxidase (365 aa).

Positions 2-365 (TAISSPINLF…QDIDTSFLHL (364 aa)) constitute an FMN hydroxy acid dehydrogenase domain. A pyruvate-binding site is contributed by Tyr-28. Residues 81-83 (PMA), Ser-110, and Gln-135 contribute to the FMN site. Tyr-137 contributes to the pyruvate binding site. Residue Thr-163 participates in FMN binding. Arg-172 lines the pyruvate pocket. Positions 239 and 261 each coordinate FMN. Residues His-263 and Arg-266 each coordinate pyruvate. His-263 functions as the Proton acceptor in the catalytic mechanism. FMN is bound by residues 294-298 (DGGIR) and Arg-318.

Belongs to the FMN-dependent alpha-hydroxy acid dehydrogenase family. Homotetramer. The cofactor is FMN.

It catalyses the reaction (S)-lactate + O2 = pyruvate + H2O2. The catalysed reaction is glyoxylate + O2 + H2O = oxalate + H2O2 + H(+). Its function is as follows. Catalyzes the oxidation of (S)-lactate (L-lactate) to pyruvate, with a reduction of O2 to H2O2. In extant N2-fixing cyanobacteria such as Nostoc, this enzyme primarily serves as an O2-scavenging enzyme, protecting nitrogenase that is extremely sensitive to O2, and is therefore an essential partner in N2 fixation. Also shows clear oxidase activity with glyoxylate in vitro, and low activity with glycerate, hydroxypyruvate and glycolate. The very low glycolate oxidase activity indicates that this enzyme is unlikely to be involved in photorespiratory glycolate metabolism, a pathway that seems to exist in this cyanobacterium, but in which the oxidation of glycolate is taken over by glycolate dehydrogenase (GlcD). Is not able to use D-lactate as substrate and does not show any dehydrogenase activity with NAD(+) or NADP(+). The sequence is that of L-lactate oxidase from Nostoc sp. (strain PCC 7120 / SAG 25.82 / UTEX 2576).